The chain runs to 460 residues: Ribosomal protein uS12 methylthiotransferase RimO (460 aa).

The 117-residue stretch at 18–134 (MKIHITSLGC…VTSIVAEVLR (117 aa)) folds into the MTTase N-terminal domain. [4Fe-4S] cluster-binding residues include cysteine 27, cysteine 63, cysteine 97, cysteine 171, cysteine 175, and cysteine 178. The Radical SAM core domain maps to 157 to 387 (STPFHYAYVK…MVLQQEISLS (231 aa)). In terms of domain architecture, TRAM spans 390–456 (QEWIGKTLEV…HYDLMGEAID (67 aa)).

This sequence belongs to the methylthiotransferase family. RimO subfamily. [4Fe-4S] cluster is required as a cofactor.

It is found in the cytoplasm. It catalyses the reaction L-aspartate(89)-[ribosomal protein uS12]-hydrogen + (sulfur carrier)-SH + AH2 + 2 S-adenosyl-L-methionine = 3-methylsulfanyl-L-aspartate(89)-[ribosomal protein uS12]-hydrogen + (sulfur carrier)-H + 5'-deoxyadenosine + L-methionine + A + S-adenosyl-L-homocysteine + 2 H(+). In terms of biological role, catalyzes the methylthiolation of an aspartic acid residue of ribosomal protein uS12. The protein is Ribosomal protein uS12 methylthiotransferase RimO of Heliobacterium modesticaldum (strain ATCC 51547 / Ice1).